The primary structure comprises 81 residues: Costars family protein ABRACL (81 aa).

This sequence belongs to the costars family.

This chain is Costars family protein ABRACL (abracl), found in Xenopus laevis (African clawed frog).